Consider the following 282-residue polypeptide: Keratin-associated protein 10-1 (282 aa).

24 tandem repeats follow at residues 26–30, 31–35, 36–40, 57–61, 79–83, 89–93, 99–103, 104–108, 109–113, 121–125, 131–135, 141–145, 146–150, 163–167, 173–177, 183–187, 193–197, 198–202, 210–214, 220–224, 225–229, 244–248, 251–255, and 262–266. Residues 26-266 are 24 X 5 AA repeats of C-C-X(3); the sequence is CCEPHCCALS…SCQASCCRPA (241 aa).

Belongs to the KRTAP type 10 family. In terms of assembly, interacts with hair keratins. As to expression, restricted to a narrow region of the hair fiber cuticle, lying approximately 20 cell layers above the apex of the dermal papilla of the hair root; not detected in any other tissues.

Its function is as follows. In the hair cortex, hair keratin intermediate filaments are embedded in an interfilamentous matrix, consisting of hair keratin-associated proteins (KRTAP), which are essential for the formation of a rigid and resistant hair shaft through their extensive disulfide bond cross-linking with abundant cysteine residues of hair keratins. The matrix proteins include the high-sulfur and high-glycine-tyrosine keratins. The protein is Keratin-associated protein 10-1 (KRTAP10-1) of Homo sapiens (Human).